Here is a 346-residue protein sequence, read N- to C-terminus: Putative aquaporin-7B (346 aa).

The Cytoplasmic segment spans residues 1–40 (MVQASGHRRSTRGSKMVSWSVIAKIQEIWCEEDERKMVRE). The helical transmembrane segment at 41–58 (FLAEFMSTYVMMVFGLGS) threads the bilayer. At 59 to 71 (VAHMVLNKTYGSY) the chain is on the extracellular side. Residues 72 to 89 (LGVNLGFGFGVTMGVHVA) form a helical membrane-spanning segment. The Cytoplasmic segment spans residues 90–93 (GRIS). The segment at residues 94 to 107 (GAHMNAAVTFTNCA) is an intramembrane region (discontinuously helical). An NPA 1 motif is present at residues 98–100 (NAA). At 108–115 (LGRVPWRK) the chain is on the cytoplasmic side. A helical transmembrane segment spans residues 116–136 (FPVHVLGQFLGSFLAAATIYS). At 137–174 (LFYTAILHFSGGELMVTGPFATAGIFATYLPDHMTLWR) the chain is on the extracellular side. The helical transmembrane segment at 175–192 (GFLNEEWLTRMLQLCLFT) threads the bilayer. The Cytoplasmic segment spans residues 193-204 (ITDQENNPALPG). The chain crosses the membrane as a helical span at residues 205–221 (THALVISILVVIIRVSH). Residues 222–225 (GINT) are Extracellular-facing. Residues 226-239 (GYAINPSRDPPPSI) constitute an intramembrane region (discontinuously helical). The NPA 2 signature appears at 230 to 232 (NPS). Topologically, residues 240 to 257 (FTFIAGWGKQVFSDGENW) are extracellular. A helical transmembrane segment spans residues 258 to 279 (WWVPVVAPLLGASLGGIIYLVF). Residues 280-346 (IGSTIPREPL…LHESMALEHF (67 aa)) are Cytoplasmic-facing.

It belongs to the MIP/aquaporin (TC 1.A.8) family. Homotetramer; each monomer provides an independent glycerol/water pore.

It is found in the membrane. The enzyme catalyses glycerol(in) = glycerol(out). It carries out the reaction H2O(in) = H2O(out). Aquaglyceroporins form homotetrameric transmembrane channels, with each monomer independently mediating glycerol and water transport across the plasma membrane along their osmotic gradient. This Homo sapiens (Human) protein is Putative aquaporin-7B.